The chain runs to 383 residues: Acetylornithine deacetylase (383 aa).

His-80 provides a ligand contact to Zn(2+). Residue Asp-82 is part of the active site. Residue Asp-112 coordinates Zn(2+). Glu-144 is an active-site residue. The Zn(2+) site is built by Glu-145, Glu-169, and His-355.

Belongs to the peptidase M20A family. ArgE subfamily. As to quaternary structure, homodimer. Zn(2+) serves as cofactor. It depends on Co(2+) as a cofactor. Glutathione is required as a cofactor.

It is found in the cytoplasm. It catalyses the reaction N(2)-acetyl-L-ornithine + H2O = L-ornithine + acetate. Its pathway is amino-acid biosynthesis; L-arginine biosynthesis; L-ornithine from N(2)-acetyl-L-ornithine (linear): step 1/1. Functionally, catalyzes the hydrolysis of the amide bond of N(2)-acetylated L-amino acids. Cleaves the acetyl group from N-acetyl-L-ornithine to form L-ornithine, an intermediate in L-arginine biosynthesis pathway, and a branchpoint in the synthesis of polyamines. In Shigella boydii serotype 18 (strain CDC 3083-94 / BS512), this protein is Acetylornithine deacetylase.